The sequence spans 283 residues: Pantothenate synthetase (283 aa).

An ATP-binding site is contributed by methionine 30 to histidine 37. Catalysis depends on histidine 37, which acts as the Proton donor. Glutamine 61 is a binding site for (R)-pantoate. Glutamine 61 lines the beta-alanine pocket. Glycine 149–aspartate 152 provides a ligand contact to ATP. Glutamine 155 is a binding site for (R)-pantoate. ATP is bound by residues valine 178 and leucine 186–arginine 189.

It belongs to the pantothenate synthetase family. Homodimer.

The protein localises to the cytoplasm. It carries out the reaction (R)-pantoate + beta-alanine + ATP = (R)-pantothenate + AMP + diphosphate + H(+). The protein operates within cofactor biosynthesis; (R)-pantothenate biosynthesis; (R)-pantothenate from (R)-pantoate and beta-alanine: step 1/1. Its function is as follows. Catalyzes the condensation of pantoate with beta-alanine in an ATP-dependent reaction via a pantoyl-adenylate intermediate. This is Pantothenate synthetase from Pseudomonas savastanoi pv. phaseolicola (strain 1448A / Race 6) (Pseudomonas syringae pv. phaseolicola (strain 1448A / Race 6)).